Reading from the N-terminus, the 187-residue chain is Putative AgrB-like protein 1 (187 aa).

The next 5 membrane-spanning stretches (helical) occupy residues 29–49, 50–70, 81–98, 103–120, and 149–169; these read VVIVLTFEFIKCISVILIAGI, LGYFKESLIVILSMCFIKPFI, CFIATLIITTSIIMLVTF, LFSIVILNLFSIFSIYNK, and ILFLITLIFFKISWISQTITW.

It belongs to the AgrB family.

It localises to the cell membrane. May be involved in the proteolytic processing of a quorum sensing system signal molecule precursor. The protein is Putative AgrB-like protein 1 of Clostridium perfringens (strain 13 / Type A).